The sequence spans 560 residues: 2-succinyl-5-enolpyruvyl-6-hydroxy-3-cyclohexene-1-carboxylate synthase (560 aa).

This sequence belongs to the TPP enzyme family. MenD subfamily. As to quaternary structure, homodimer. Requires Mg(2+) as cofactor. It depends on Mn(2+) as a cofactor. Thiamine diphosphate is required as a cofactor.

The enzyme catalyses isochorismate + 2-oxoglutarate + H(+) = 5-enolpyruvoyl-6-hydroxy-2-succinyl-cyclohex-3-ene-1-carboxylate + CO2. It functions in the pathway quinol/quinone metabolism; 1,4-dihydroxy-2-naphthoate biosynthesis; 1,4-dihydroxy-2-naphthoate from chorismate: step 2/7. Its pathway is quinol/quinone metabolism; menaquinone biosynthesis. Its function is as follows. Catalyzes the thiamine diphosphate-dependent decarboxylation of 2-oxoglutarate and the subsequent addition of the resulting succinic semialdehyde-thiamine pyrophosphate anion to isochorismate to yield 2-succinyl-5-enolpyruvyl-6-hydroxy-3-cyclohexene-1-carboxylate (SEPHCHC). The polypeptide is 2-succinyl-5-enolpyruvyl-6-hydroxy-3-cyclohexene-1-carboxylate synthase (Lactococcus lactis subsp. lactis (strain IL1403) (Streptococcus lactis)).